The chain runs to 84 residues: Small ribosomal subunit protein bS20 (84 aa).

The protein belongs to the bacterial ribosomal protein bS20 family.

Binds directly to 16S ribosomal RNA. The sequence is that of Small ribosomal subunit protein bS20 from Ligilactobacillus salivarius (strain UCC118) (Lactobacillus salivarius).